Consider the following 197-residue polypeptide: Probable nicotinate-nucleotide adenylyltransferase (197 aa).

Belongs to the NadD family.

It catalyses the reaction nicotinate beta-D-ribonucleotide + ATP + H(+) = deamido-NAD(+) + diphosphate. It functions in the pathway cofactor biosynthesis; NAD(+) biosynthesis; deamido-NAD(+) from nicotinate D-ribonucleotide: step 1/1. Its function is as follows. Catalyzes the reversible adenylation of nicotinate mononucleotide (NaMN) to nicotinic acid adenine dinucleotide (NaAD). This chain is Probable nicotinate-nucleotide adenylyltransferase, found in Pseudothermotoga lettingae (strain ATCC BAA-301 / DSM 14385 / NBRC 107922 / TMO) (Thermotoga lettingae).